The sequence spans 297 residues: Protoheme IX farnesyltransferase (297 aa).

The next 9 membrane-spanning stretches (helical) occupy residues Val23–Pro43, Val49–Ile69, Ile93–Leu113, Leu117–Leu137, Asn144–Ala164, Ala171–Leu191, Arg215–Ile235, Ser238–Trp258, and Phe275–Leu295.

Belongs to the UbiA prenyltransferase family. Protoheme IX farnesyltransferase subfamily.

The protein localises to the cell inner membrane. The catalysed reaction is heme b + (2E,6E)-farnesyl diphosphate + H2O = Fe(II)-heme o + diphosphate. It functions in the pathway porphyrin-containing compound metabolism; heme O biosynthesis; heme O from protoheme: step 1/1. Its function is as follows. Converts heme B (protoheme IX) to heme O by substitution of the vinyl group on carbon 2 of heme B porphyrin ring with a hydroxyethyl farnesyl side group. This chain is Protoheme IX farnesyltransferase, found in Bordetella bronchiseptica (strain ATCC BAA-588 / NCTC 13252 / RB50) (Alcaligenes bronchisepticus).